The chain runs to 1099 residues: Carbamoyl phosphate synthase large chain (1099 aa).

A carboxyphosphate synthetic domain region spans residues 1 to 402 (MPKREDIKRI…ALGKALRSLE (402 aa)). Arginine 129, arginine 169, glycine 175, glycine 176, glutamate 208, valine 210, glutamate 215, glycine 241, isoleucine 242, histidine 243, glutamine 285, and glutamate 299 together coordinate ATP. An ATP-grasp 1 domain is found at 133 to 328 (KETMEKAGLE…IAKVAALLAV (196 aa)). Residues glutamine 285, glutamate 299, and asparagine 301 each contribute to the Mg(2+) site. Mn(2+) contacts are provided by glutamine 285, glutamate 299, and asparagine 301. The segment at 403–541 (LDAAPKLDLE…STYNGVENEA (139 aa)) is oligomerization domain. Residues 542–944 (VPSDREKIMI…AFAKAQIAAG (403 aa)) are carbamoyl phosphate synthetic domain. Positions 666–857 (AKLLKQIGLK…VARIAAKIMV (192 aa)) constitute an ATP-grasp 2 domain. ATP is bound by residues arginine 702, lysine 741, leucine 743, glutamate 748, glycine 773, valine 774, histidine 775, serine 776, glutamine 816, and glutamate 828. Positions 816, 828, and 830 each coordinate Mg(2+). Mn(2+) is bound by residues glutamine 816, glutamate 828, and asparagine 830. The region spanning 945 to 1099 (NPLPTTGAIL…VRRLTDTWKM (155 aa)) is the MGS-like domain. The allosteric domain stretch occupies residues 945–1099 (NPLPTTGAIL…VRRLTDTWKM (155 aa)).

It belongs to the CarB family. In terms of assembly, composed of two chains; the small (or glutamine) chain promotes the hydrolysis of glutamine to ammonia, which is used by the large (or ammonia) chain to synthesize carbamoyl phosphate. Tetramer of heterodimers (alpha,beta)4. It depends on Mg(2+) as a cofactor. The cofactor is Mn(2+).

It catalyses the reaction hydrogencarbonate + L-glutamine + 2 ATP + H2O = carbamoyl phosphate + L-glutamate + 2 ADP + phosphate + 2 H(+). The catalysed reaction is hydrogencarbonate + NH4(+) + 2 ATP = carbamoyl phosphate + 2 ADP + phosphate + 2 H(+). The protein operates within amino-acid biosynthesis; L-arginine biosynthesis; carbamoyl phosphate from bicarbonate: step 1/1. It functions in the pathway pyrimidine metabolism; UMP biosynthesis via de novo pathway; (S)-dihydroorotate from bicarbonate: step 1/3. Large subunit of the glutamine-dependent carbamoyl phosphate synthetase (CPSase). CPSase catalyzes the formation of carbamoyl phosphate from the ammonia moiety of glutamine, carbonate, and phosphate donated by ATP, constituting the first step of 2 biosynthetic pathways, one leading to arginine and/or urea and the other to pyrimidine nucleotides. The large subunit (synthetase) binds the substrates ammonia (free or transferred from glutamine from the small subunit), hydrogencarbonate and ATP and carries out an ATP-coupled ligase reaction, activating hydrogencarbonate by forming carboxy phosphate which reacts with ammonia to form carbamoyl phosphate. The sequence is that of Carbamoyl phosphate synthase large chain from Thermotoga petrophila (strain ATCC BAA-488 / DSM 13995 / JCM 10881 / RKU-1).